Reading from the N-terminus, the 43-residue chain is Protein PsbN (43 aa).

The chain crosses the membrane as a helical span at residues Thr5 to Ile25.

It belongs to the PsbN family.

It localises to the plastid. Its subcellular location is the chloroplast thylakoid membrane. Its function is as follows. May play a role in photosystem I and II biogenesis. In Gracilaria tenuistipitata var. liui (Red alga), this protein is Protein PsbN.